A 459-amino-acid chain; its full sequence is Putrescine aminotransferase (459 aa).

Residues 150 to 151 and Gln-274 contribute to the pyridoxal 5'-phosphate site; that span reads GT. N6-(pyridoxal phosphate)lysine is present on Lys-300. Thr-332 contacts pyridoxal 5'-phosphate.

Belongs to the class-III pyridoxal-phosphate-dependent aminotransferase family. Putrescine aminotransferase subfamily. It depends on pyridoxal 5'-phosphate as a cofactor.

The enzyme catalyses an alkane-alpha,omega-diamine + 2-oxoglutarate = an omega-aminoaldehyde + L-glutamate. It catalyses the reaction putrescine + 2-oxoglutarate = 1-pyrroline + L-glutamate + H2O. The catalysed reaction is cadaverine + 2-oxoglutarate = 5-aminopentanal + L-glutamate. The protein operates within amine and polyamine degradation; putrescine degradation; 4-aminobutanal from putrescine (transaminase route): step 1/1. Its function is as follows. Catalyzes the aminotransferase reaction from putrescine to 2-oxoglutarate, leading to glutamate and 4-aminobutanal, which spontaneously cyclizes to form 1-pyrroline. This is the first step in one of two pathways for putrescine degradation, where putrescine is converted into 4-aminobutanoate (gamma-aminobutyrate or GABA) via 4-aminobutanal. Also functions as a cadaverine transaminase in a a L-lysine degradation pathway to succinate that proceeds via cadaverine, glutarate and L-2-hydroxyglutarate. The chain is Putrescine aminotransferase from Klebsiella pneumoniae (strain 342).